The sequence spans 714 residues: Protein HAPLESS 2-B (714 aa).

The N-terminal stretch at 1–33 (MAPRRRRRAARSSRPLLLALLAAAVNNFAPAGG) is a signal peptide. The Extracellular portion of the chain corresponds to 34 to 552 (VEVLAKSRLE…FFTGTTCSTR (519 aa)). Intrachain disulfides connect C45/C59, C134/C164, C146/C194, C165/C321, C167/C177, C304/C328, and C441/C479. Residues 553–573 (CWSFLKFVIHGLLLVAVLWLL) traverse the membrane as a helical segment. Over 574 to 714 (HRKGLFDPLY…HGDRRHHAWH (141 aa)) the chain is Cytoplasmic. The disordered stretch occupies residues 597–619 (RARRRHKRAHSHRHSHHHDAHKR). Residues 598–619 (ARRRHKRAHSHRHSHHHDAHKR) are compositionally biased toward basic residues.

It belongs to the HAP2/GCS1 family.

The protein localises to the endoplasmic reticulum membrane. It is found in the cell membrane. Functionally, required for male fertility. Plays a role in pollen tube guidance and successful gamete attachment. Essential for the fusion of gametes during double fertilization, where one male gamete fuses with the egg to produce a zygote, and another male gamete fuses with the central cell to produce the endosperm. Mediates the fusion of cell membranes. Not required for pollen tube outgrowth. This Oryza sativa subsp. japonica (Rice) protein is Protein HAPLESS 2-B (HAP2B).